The primary structure comprises 156 residues: 6,7-dimethyl-8-ribityllumazine synthase (156 aa).

5-amino-6-(D-ribitylamino)uracil-binding positions include Phe-23, 57–59 (AFE), and 81–83 (AVI). (2S)-2-hydroxy-3-oxobutyl phosphate is bound at residue 86–87 (ST). His-89 (proton donor) is an active-site residue. Position 114 (Phe-114) interacts with 5-amino-6-(D-ribitylamino)uracil. A (2S)-2-hydroxy-3-oxobutyl phosphate-binding site is contributed by Arg-128.

This sequence belongs to the DMRL synthase family.

It carries out the reaction (2S)-2-hydroxy-3-oxobutyl phosphate + 5-amino-6-(D-ribitylamino)uracil = 6,7-dimethyl-8-(1-D-ribityl)lumazine + phosphate + 2 H2O + H(+). It participates in cofactor biosynthesis; riboflavin biosynthesis; riboflavin from 2-hydroxy-3-oxobutyl phosphate and 5-amino-6-(D-ribitylamino)uracil: step 1/2. Its function is as follows. Catalyzes the formation of 6,7-dimethyl-8-ribityllumazine by condensation of 5-amino-6-(D-ribitylamino)uracil with 3,4-dihydroxy-2-butanone 4-phosphate. This is the penultimate step in the biosynthesis of riboflavin. The protein is 6,7-dimethyl-8-ribityllumazine synthase of Campylobacter curvus (strain 525.92).